We begin with the raw amino-acid sequence, 463 residues long: Ribulose bisphosphate carboxylase (463 aa).

Asparagine 116 is a binding site for substrate. The Proton acceptor role is filled by lysine 171. Residue lysine 173 participates in substrate binding. Mg(2+) is bound by residues lysine 196, aspartate 198, and glutamate 199. Lysine 196 bears the N6-carboxylysine mark. The active-site Proton acceptor is the histidine 294. Arginine 295, histidine 328, and serine 375 together coordinate substrate.

This sequence belongs to the RuBisCO large chain family. Type II subfamily. In terms of assembly, homodimer. The cofactor is Mg(2+).

The catalysed reaction is 2 (2R)-3-phosphoglycerate + 2 H(+) = D-ribulose 1,5-bisphosphate + CO2 + H2O. It catalyses the reaction D-ribulose 1,5-bisphosphate + O2 = 2-phosphoglycolate + (2R)-3-phosphoglycerate + 2 H(+). In terms of biological role, ruBisCO catalyzes two reactions: the carboxylation of D-ribulose 1,5-bisphosphate, the primary event in carbon dioxide fixation, as well as the oxidative fragmentation of the pentose substrate. Both reactions occur simultaneously and in competition at the same active site. The sequence is that of Ribulose bisphosphate carboxylase from Hydrogenovibrio marinus.